The following is a 133-amino-acid chain: Putative redox protein FMP46, mitochondrial (133 aa).

The N-terminal 21 residues, 1–21 (MSFWKTLQRQPRTISLFTNDI), are a transit peptide targeting the mitochondrion. Cysteine 97 is an active-site residue.

Belongs to the FMP46 family.

The protein resides in the mitochondrion. Its function is as follows. Putative mitochondrial redox protein which could be involved in the reduction of small toxic molecules. This Saccharomyces cerevisiae (strain ATCC 204508 / S288c) (Baker's yeast) protein is Putative redox protein FMP46, mitochondrial (FMP46).